We begin with the raw amino-acid sequence, 121 residues long: Protein YxiB (121 aa).

In Bacillus subtilis (strain 168), this protein is Protein YxiB (yxiB).